The sequence spans 737 residues: Polyribonucleotide nucleotidyltransferase (737 aa).

2 residues coordinate Mg(2+): Asp-489 and Asp-495. Positions 556–615 (PKIDTIKIDVDKIKIVIGKGGETIDKIIAETGVKIDIDEEGNVSIYSSDQDAINRAKEII) constitute a KH domain. In terms of domain architecture, S1 motif spans 625–693 (DEVYRAKVVR…EKGRIDASMK (69 aa)). The segment at 691–737 (SMKALLPRPPKPEHDEKGEKSERPHRPRHHKDHKPKKEFTETPKDSE) is disordered. A compositionally biased stretch (basic and acidic residues) spans 700-714 (PKPEHDEKGEKSERP). Basic residues predominate over residues 715–724 (HRPRHHKDHK). A compositionally biased stretch (basic and acidic residues) spans 725 to 737 (PKKEFTETPKDSE).

Belongs to the polyribonucleotide nucleotidyltransferase family. Mg(2+) is required as a cofactor.

The protein resides in the cytoplasm. The enzyme catalyses RNA(n+1) + phosphate = RNA(n) + a ribonucleoside 5'-diphosphate. Its function is as follows. Involved in mRNA degradation. Catalyzes the phosphorolysis of single-stranded polyribonucleotides processively in the 3'- to 5'-direction. This chain is Polyribonucleotide nucleotidyltransferase, found in Streptococcus pneumoniae (strain ATCC 700669 / Spain 23F-1).